Reading from the N-terminus, the 147-residue chain is Receptor activity-modifying protein 3 (147 aa).

The first 22 residues, 1–22 (MATPAQRLHLLPLLLLLCGECA), serve as a signal peptide directing secretion. Residues 23–112 (QVCGCNETGM…CTVDRTHWED (90 aa)) are Extracellular-facing. Asparagine 28, asparagine 57, asparagine 70, and asparagine 102 each carry an N-linked (GlcNAc...) asparagine glycan. 2 disulfides stabilise this stretch: cysteine 39–cysteine 71 and cysteine 56–cysteine 103. Residues 113-137 (PPDEVLIPLIAVPVLLTVAMAGLVV) form a helical membrane-spanning segment. At 138–147 (WRSKRTDRLL) the chain is on the cytoplasmic side.

The protein belongs to the RAMP family. Heterodimer of CALCRL and RAMP3; interaction induces allosteric modulation of CALCRL function and ligand specificity for adrenomedullin/ADM and intermedin/ADM2. Heterodimer of CALCR and RAMP3; interaction form the receptor complex AMYR3 for amylin/IAPP. Interacts with GPER1.

It localises to the cell membrane. The protein resides in the membrane. Accessory protein that interacts with and modulates the function of G-protein coupled receptors including calcitonin gene-related peptide type 1 receptor (CALCRL), calcitonin receptor (CALCR) and G-protein coupled estrogen receptor 1 (GPER1). Required for the transport of CALCRL and GPER1 receptors to the plasma membrane. Plays a role in cardioprotection by reducing cardiac hypertrophy and perivascular fibrosis in a GPER1-dependent manner. Together with CALCRL, form a receptor complex for adrenomedullin/ADM and intermedin/ADM2. Together with CALCR, act as a receptor complex for amylin/IAPP. This Rattus norvegicus (Rat) protein is Receptor activity-modifying protein 3.